A 151-amino-acid polypeptide reads, in one-letter code: 3-hydroxyacyl-[acyl-carrier-protein] dehydratase FabZ (151 aa).

The active site involves histidine 57.

The protein belongs to the thioester dehydratase family. FabZ subfamily.

It is found in the cytoplasm. The enzyme catalyses a (3R)-hydroxyacyl-[ACP] = a (2E)-enoyl-[ACP] + H2O. Involved in unsaturated fatty acids biosynthesis. Catalyzes the dehydration of short chain beta-hydroxyacyl-ACPs and long chain saturated and unsaturated beta-hydroxyacyl-ACPs. The polypeptide is 3-hydroxyacyl-[acyl-carrier-protein] dehydratase FabZ (Tolumonas auensis (strain DSM 9187 / NBRC 110442 / TA 4)).